A 105-amino-acid polypeptide reads, in one-letter code: Guanyl-specific ribonuclease U1 (105 aa).

Glutamine 1 is modified (pyrrolidone carboxylic acid). 2 disulfide bridges follow: cysteine 8–cysteine 103 and cysteine 51–cysteine 87. Histidine 37 is an active-site residue. Glutamate 57 acts as the Proton acceptor in catalysis. Histidine 92 (proton donor) is an active-site residue.

Belongs to the ribonuclease N1/T1 family.

The catalysed reaction is [RNA] containing guanosine + H2O = an [RNA fragment]-3'-guanosine-3'-phosphate + a 5'-hydroxy-ribonucleotide-3'-[RNA fragment].. This chain is Guanyl-specific ribonuclease U1, found in Ustilago sphaerogena (Smut fungus).